The following is a 259-amino-acid chain: Glutamate racemase (259 aa).

Substrate is bound by residues 7-8 (DS) and 39-40 (YG). The active-site Proton donor/acceptor is the Cys70. 71-72 (NS) contributes to the substrate binding site. The Proton donor/acceptor role is filled by Cys180. Residue 181–182 (TH) participates in substrate binding.

Belongs to the aspartate/glutamate racemases family.

The enzyme catalyses L-glutamate = D-glutamate. It functions in the pathway cell wall biogenesis; peptidoglycan biosynthesis. In terms of biological role, provides the (R)-glutamate required for cell wall biosynthesis. The polypeptide is Glutamate racemase (Hydrogenobaculum sp. (strain Y04AAS1)).